The primary structure comprises 1343 residues: DNA-directed RNA polymerase subunit beta (1343 aa).

It belongs to the RNA polymerase beta chain family. The RNAP catalytic core consists of 2 alpha, 1 beta, 1 beta' and 1 omega subunit. When a sigma factor is associated with the core the holoenzyme is formed, which can initiate transcription.

The catalysed reaction is RNA(n) + a ribonucleoside 5'-triphosphate = RNA(n+1) + diphosphate. DNA-dependent RNA polymerase catalyzes the transcription of DNA into RNA using the four ribonucleoside triphosphates as substrates. The polypeptide is DNA-directed RNA polymerase subunit beta (Haemophilus influenzae (strain 86-028NP)).